A 200-amino-acid chain; its full sequence is Dephospho-CoA kinase (200 aa).

Residues 3-200 (IIGLTGGIGS…LWQRFATQVE (198 aa)) form the DPCK domain. 11 to 16 (GSGKST) contacts ATP.

It belongs to the CoaE family.

Its subcellular location is the cytoplasm. It carries out the reaction 3'-dephospho-CoA + ATP = ADP + CoA + H(+). It participates in cofactor biosynthesis; coenzyme A biosynthesis; CoA from (R)-pantothenate: step 5/5. Catalyzes the phosphorylation of the 3'-hydroxyl group of dephosphocoenzyme A to form coenzyme A. In Corynebacterium diphtheriae (strain ATCC 700971 / NCTC 13129 / Biotype gravis), this protein is Dephospho-CoA kinase.